The primary structure comprises 347 residues: DNA-directed RNA polymerase subunit alpha (347 aa).

The alpha N-terminal domain (alpha-NTD) stretch occupies residues 1-243 (MLIKQGDRLI…DQISVFINFD (243 aa)). An alpha C-terminal domain (alpha-CTD) region spans residues 260 to 347 (FNEHLFKSID…EWKRKQQHEA (88 aa)).

This sequence belongs to the RNA polymerase alpha chain family. Homodimer. The RNAP catalytic core consists of 2 alpha, 1 beta, 1 beta' and 1 omega subunit. When a sigma factor is associated with the core the holoenzyme is formed, which can initiate transcription.

It catalyses the reaction RNA(n) + a ribonucleoside 5'-triphosphate = RNA(n+1) + diphosphate. In terms of biological role, DNA-dependent RNA polymerase catalyzes the transcription of DNA into RNA using the four ribonucleoside triphosphates as substrates. This Nitratidesulfovibrio vulgaris (strain ATCC 29579 / DSM 644 / CCUG 34227 / NCIMB 8303 / VKM B-1760 / Hildenborough) (Desulfovibrio vulgaris) protein is DNA-directed RNA polymerase subunit alpha.